Reading from the N-terminus, the 372-residue chain is Cobalt-precorrin-5B C(1)-methyltransferase (372 aa).

This sequence belongs to the CbiD family.

It catalyses the reaction Co-precorrin-5B + S-adenosyl-L-methionine = Co-precorrin-6A + S-adenosyl-L-homocysteine. Its pathway is cofactor biosynthesis; adenosylcobalamin biosynthesis; cob(II)yrinate a,c-diamide from sirohydrochlorin (anaerobic route): step 6/10. In terms of biological role, catalyzes the methylation of C-1 in cobalt-precorrin-5B to form cobalt-precorrin-6A. The protein is Cobalt-precorrin-5B C(1)-methyltransferase of Geobacillus kaustophilus (strain HTA426).